We begin with the raw amino-acid sequence, 203 residues long: FMN-dependent NADH:quinone oxidoreductase (203 aa).

FMN is bound by residues serine 9, 15–17 (SVS), and 139–142 (TRGG).

It belongs to the azoreductase type 1 family. Homodimer. The cofactor is FMN.

The catalysed reaction is 2 a quinone + NADH + H(+) = 2 a 1,4-benzosemiquinone + NAD(+). It carries out the reaction N,N-dimethyl-1,4-phenylenediamine + anthranilate + 2 NAD(+) = 2-(4-dimethylaminophenyl)diazenylbenzoate + 2 NADH + 2 H(+). Functionally, quinone reductase that provides resistance to thiol-specific stress caused by electrophilic quinones. Its function is as follows. Also exhibits azoreductase activity. Catalyzes the reductive cleavage of the azo bond in aromatic azo compounds to the corresponding amines. This Albidiferax ferrireducens (strain ATCC BAA-621 / DSM 15236 / T118) (Rhodoferax ferrireducens) protein is FMN-dependent NADH:quinone oxidoreductase.